We begin with the raw amino-acid sequence, 362 residues long: tRNA/tmRNA (uracil-C(5))-methyltransferase (362 aa).

Residues Gln182, Tyr210, Asn215, Glu231, and Asp293 each contribute to the S-adenosyl-L-methionine site. Cys318 functions as the Nucleophile in the catalytic mechanism. Residue Glu352 is the Proton acceptor of the active site.

It belongs to the class I-like SAM-binding methyltransferase superfamily. RNA M5U methyltransferase family. TrmA subfamily.

The enzyme catalyses uridine(54) in tRNA + S-adenosyl-L-methionine = 5-methyluridine(54) in tRNA + S-adenosyl-L-homocysteine + H(+). The catalysed reaction is uridine(341) in tmRNA + S-adenosyl-L-methionine = 5-methyluridine(341) in tmRNA + S-adenosyl-L-homocysteine + H(+). In terms of biological role, dual-specificity methyltransferase that catalyzes the formation of 5-methyluridine at position 54 (m5U54) in all tRNAs, and that of position 341 (m5U341) in tmRNA (transfer-mRNA). This chain is tRNA/tmRNA (uracil-C(5))-methyltransferase, found in Neisseria meningitidis serogroup A / serotype 4A (strain DSM 15465 / Z2491).